A 614-amino-acid chain; its full sequence is MAFQDFDKIQERVNANRKRKFRKRIIVGTVSLLVVVAAIVGGAFAYVAYEKRNEQQQQQQQAKNHNKSGSGNNVVKDSDKKSPSPPTPSQKAPVSAAQSVKPGQGDKIIQTLCSSTLYMQICEKTLKNRTDKGFALDNPTTFLKSAIEAVNEDLDLVLEKVLSLKTENQDDKDAIEQCKLLVEDAKEETVASLNKINVTEVNSFEKVVPDLESWLSAVMSYQETCLDGFEEGNLKSEVKTSVNSSQVLTSNSLALIKTFTENLSPVMKVVERHLLDDIPSWVSNDDRRMLRAVDVKALKPNATVAKDGSGDFTTINDALRAMPEKYEGRYIIYVKQGIYDEYVTVDKKKANLTMVGDGSQKTIVTGNKSHAKKIRTFLTATFVAQGEGFMAQSMGFRNTAGPEGHQAVAIRVQSDRSIFLNCRFEGYQDTLYAYTHRQYYRSCVIVGTIDFIFGDAAAIFQNCNIFIRKGLPGQKNTVTAQGRVDKFQTTGFVVHNCKIAANEDLKPVKEEYKSYLGRPWKNYSRTIIMESKIENVIDPVGWLRWQETDFAIDTLYYAEYNNKGSSGDTTSRVKWPGFKVINKEEALNYTVGPFLQGDWISASGSPVKLGLYDA.

The helical transmembrane segment at 25-45 (IIVGTVSLLVVVAAIVGGAFA) threads the bilayer. The segment at 55-102 (QQQQQQQAKNHNKSGSGNNVVKDSDKKSPSPPTPSQKAPVSAAQSVKP) is disordered. 7 N-linked (GlcNAc...) asparagine glycosylation sites follow: N66, N128, N197, N243, N301, N351, and N367. Residues 103 to 255 (GQGDKIIQTL…QVLTSNSLAL (153 aa)) form a pectinesterase inhibitor 13 region. The tract at residues 301 to 598 (NATVAKDGSG…YTVGPFLQGD (298 aa)) is pectinesterase 13. The substrate site is built by T376 and Q406. D429 functions as the Proton donor; for pectinesterase activity in the catalytic mechanism. A disulfide bridge connects residues C443 and C463. D450 acts as the Nucleophile; for pectinesterase activity in catalysis. Substrate is bound by residues R518 and W520. N522 and N588 each carry an N-linked (GlcNAc...) asparagine glycan.

This sequence in the N-terminal section; belongs to the PMEI family. The protein in the C-terminal section; belongs to the pectinesterase family. As to expression, expressed in flower buds.

It is found in the membrane. The catalysed reaction is [(1-&gt;4)-alpha-D-galacturonosyl methyl ester](n) + n H2O = [(1-&gt;4)-alpha-D-galacturonosyl](n) + n methanol + n H(+). The protein operates within glycan metabolism; pectin degradation; 2-dehydro-3-deoxy-D-gluconate from pectin: step 1/5. Its function is as follows. Acts in the modification of cell walls via demethylesterification of cell wall pectin. This chain is Probable pectinesterase/pectinesterase inhibitor 13 (PME13), found in Arabidopsis thaliana (Mouse-ear cress).